The chain runs to 229 residues: 2,3-bisphosphoglycerate-dependent phosphoglycerate mutase (229 aa).

Residues 8 to 15 (RHGESAWN), 21 to 22 (TG), R60, 87 to 90 (ERHY), K98, 114 to 115 (RR), and 183 to 184 (GN) each bind substrate. H9 functions as the Tele-phosphohistidine intermediate in the catalytic mechanism. Catalysis depends on E87, which acts as the Proton donor/acceptor.

This sequence belongs to the phosphoglycerate mutase family. BPG-dependent PGAM subfamily. Homodimer.

The enzyme catalyses (2R)-2-phosphoglycerate = (2R)-3-phosphoglycerate. It functions in the pathway carbohydrate degradation; glycolysis; pyruvate from D-glyceraldehyde 3-phosphate: step 3/5. Its function is as follows. Catalyzes the interconversion of 2-phosphoglycerate and 3-phosphoglycerate. This Polynucleobacter asymbioticus (strain DSM 18221 / CIP 109841 / QLW-P1DMWA-1) (Polynucleobacter necessarius subsp. asymbioticus) protein is 2,3-bisphosphoglycerate-dependent phosphoglycerate mutase.